The following is a 153-amino-acid chain: Transcriptional repressor NrdR (153 aa).

A zinc finger lies at 3-34 (CPYCGHPDTRVVDSRPSDEGMAIRRRRECPSC). One can recognise an ATP-cone domain in the interval 49-136 (LMVVKRDGRK…VYREFDSVER (88 aa)).

This sequence belongs to the NrdR family. It depends on Zn(2+) as a cofactor.

Its function is as follows. Negatively regulates transcription of bacterial ribonucleotide reductase nrd genes and operons by binding to NrdR-boxes. The sequence is that of Transcriptional repressor NrdR from Thermus thermophilus (strain ATCC BAA-163 / DSM 7039 / HB27).